Consider the following 141-residue polypeptide: Nucleoside diphosphate kinase (141 aa).

Lys-11, Phe-59, Arg-87, Thr-93, Arg-104, and Asn-114 together coordinate ATP. His-117 serves as the catalytic Pros-phosphohistidine intermediate.

Belongs to the NDK family. In terms of assembly, homotetramer. Mg(2+) serves as cofactor.

Its subcellular location is the cytoplasm. It carries out the reaction a 2'-deoxyribonucleoside 5'-diphosphate + ATP = a 2'-deoxyribonucleoside 5'-triphosphate + ADP. The catalysed reaction is a ribonucleoside 5'-diphosphate + ATP = a ribonucleoside 5'-triphosphate + ADP. In terms of biological role, major role in the synthesis of nucleoside triphosphates other than ATP. The ATP gamma phosphate is transferred to the NDP beta phosphate via a ping-pong mechanism, using a phosphorylated active-site intermediate. This chain is Nucleoside diphosphate kinase, found in Legionella pneumophila (strain Paris).